The following is a 175-amino-acid chain: Gamma-crystallin B (175 aa).

Beta/gamma crystallin 'Greek key' domains lie at 2-40 (GKITFYEDRAFQGRSYECTTDCPNLQPYFSRCNSIRVES) and 41-83 (GCWM…CLIP). A connecting peptide region spans residues 84-88 (PHSGA). Beta/gamma crystallin 'Greek key' domains lie at 89–129 (YRMK…NVLE) and 130–172 (GSWI…RRVM).

The protein belongs to the beta/gamma-crystallin family. As to quaternary structure, monomer.

In terms of biological role, crystallins are the dominant structural components of the vertebrate eye lens. This Homo sapiens (Human) protein is Gamma-crystallin B (CRYGB).